A 664-amino-acid polypeptide reads, in one-letter code: Ubiquinol oxidase subunit 1 (664 aa).

2 helical membrane passes run 15–35 (PILVGTFIGVVIVGVAVLGLI) and 57–77 (LAAMYIILALVALFRGFADAI). A heme b-binding site is contributed by His-106. 12 helical membrane-spanning segments follow: residues 109–129 (IMIFFLAMAFMTGLFNFIVPL), 136–156 (VAFPFLNNLSFWMTAVAFILV), 190–210 (YIWAVQISGVGTLLTGVNFFV), 233–253 (LCASILIMVAFPVLTVAVGLL), 278–298 (LIWAWGHPEVYILVIPAFGVF), 316–336 (MVYATCSIMVLSFLVWVHHFF), 347–367 (FFGIATMIISIPTGIKLFNWL), 383–403 (WAVGFMITFTIGGMTGVMLAI), 414–434 (LFLIAHFHNTIIGGVYFGYIC), 456–476 (AFWFWFVGFYCAFVPLYIVGF), 490–510 (AWHPWLLVAEVGAVLVMLGIA), and 603–623 (ALIFGFAAVWYIWWLAAVGLV). The Cu cation site is built by His-284, Tyr-288, His-333, and His-334. The 1'-histidyl-3'-tyrosine (His-Tyr) cross-link spans 284 to 288 (HPEVY). His-419 lines the Fe(II)-heme a pocket. His-421 serves as a coordination point for heme b.

Belongs to the heme-copper respiratory oxidase family. In terms of assembly, heterotetramer of the subunits 1, 2, 3 and 4.

The protein resides in the cell membrane. Catalytic subunit of the enzyme. Electrons originating in a quinol are transferred to the bimetallic center formed by heme a and copper B. The sequence is that of Ubiquinol oxidase subunit 1 (cyaA) from Acetobacter aceti.